The chain runs to 297 residues: Adrenocorticotropic hormone receptor (297 aa).

Topologically, residues 1 to 23 (MKHIIHASGNVNGTARNNSDCPH) are extracellular. N-linked (GlcNAc...) asparagine glycosylation is found at asparagine 12 and asparagine 17. Intrachain disulfides connect cysteine 21-cysteine 253 and cysteine 245-cysteine 251. The helical transmembrane segment at 24–49 (VALPEEIFFIISITGVLENLIIILAV) threads the bilayer. Residues 50 to 58 (IKNKNLQFP) are Cytoplasmic-facing. A helical transmembrane segment spans residues 59–79 (MYFFICSLAISDMLGSLYKIL). Residues 80–104 (ESILIMFRNMGYFKPHGSFETTTDD) are Extracellular-facing. Residues 105 to 126 (IIDTMFILSLLGSIFSLLAIAV) form a helical membrane-spanning segment. The Cytoplasmic portion of the chain corresponds to 127 to 147 (DRYITIFHALQYHSIVTMHRT). A helical transmembrane segment spans residues 148–168 (IAVLSIIWTFCIGSGITMVLF). Residues 169 to 180 (SHHVPTVLTFTS) lie on the Extracellular side of the membrane. A helical transmembrane segment spans residues 181 to 199 (LFPLMLVFILCLYVHMFLM). Residues 200-217 (ARSHARNISTLPRGNMRG) are Cytoplasmic-facing. The chain crosses the membrane as a helical span at residues 218–244 (AITLTILLGVFIFCWAPFILHILLVTF). The Extracellular segment spans residues 245 to 256 (CPNNPYCTCYIS). Residues 257-278 (LFHVNGMLIMCNAVIDPFIYAF) traverse the membrane as a helical segment. Residues 279-297 (RSPELRSAFRRMISYSKCL) are Cytoplasmic-facing. Residue cysteine 296 is the site of S-palmitoyl cysteine attachment.

It belongs to the G-protein coupled receptor 1 family. As to quaternary structure, homodimer. Interacts with corticotropin (ACTH). Interacts with MRAP; this interaction targets MC2R to the plasma membrane. Interacts with MRAP2; competing with MRAP for binding to MC2R and impairing the binding of corticotropin (ACTH). Ubiquitinated by MGRN1 that may be involved in post-endocytic trafficking and/or degradation of internalized receptor.

It is found in the cell membrane. Functionally, hormone receptor primarily expressed in adrenal cortex that plays a key role in regulating adrenocortical function. Upon corticotropin (ACTH) binding, facilitates the release of adrenal glucocorticoids, including cortisol and corticosterone. In addition, MC2R is required for fetal and neonatal adrenal gland development. Mechanistically, activates adenylate cyclase (cAMP), the MAPK cascade as well as the cAMP-dependent protein kinase A pathway leading to steroidogenic factor 1/NR5A1-mediated transcriptional activation. The chain is Adrenocorticotropic hormone receptor (MC2R) from Cavia porcellus (Guinea pig).